The chain runs to 206 residues: Platelet glycoprotein Ib beta chain (206 aa).

The first 26 residues, 1–26, serve as a signal peptide directing secretion; it reads MGSRPRGALSLLLLLLAPPSRPASGC. Cystine bridges form between cysteine 26–cysteine 32 and cysteine 30–cysteine 39. One can recognise an LRRNT domain in the interval 27–55; the sequence is PAPCRCSETRVDCGRRGLTWASLPAAFPP. Residues 27–150 lie on the Extracellular side of the membrane; that stretch reads PAPCRCSETR…CAPGLLCWGA (124 aa). Residues 60–83 form an LRR repeat; that stretch reads LVLTDNNLTALPPGLLDTLPALRR. Positions 89–143 constitute an LRRCT domain; sequence NPWRCDCRLLPLRAWLAGRPEREFYRDLRCVAPLALRGRLLPYVAEDELRAACAP. 2 disulfide bridges follow: cysteine 93–cysteine 118 and cysteine 95–cysteine 141. Residues 151 to 171 form a helical membrane-spanning segment; sequence LVAQLALLVLGLLHALLLALL. Residues 172–206 are Cytoplasmic-facing; the sequence is LSRLRRLRAQARARSTREFSLTAPLVAESAGGGAS. Serine 186 carries the post-translational modification Phosphoserine. The residue at position 191 (serine 191) is a Phosphoserine; by PKA. Threonine 193 is subject to Phosphothreonine. Serine 200 is modified (phosphoserine).

Two GP-Ib beta are disulfide-linked to one GP-Ib alpha. GP-IX is complexed with the GP-Ib heterodimer via a non covalent linkage. Interacts with TRAF4.

It localises to the membrane. In terms of biological role, gp-Ib, a surface membrane protein of platelets, participates in the formation of platelet plugs by binding to von Willebrand factor, which is already bound to the subendothelium. This chain is Platelet glycoprotein Ib beta chain (Gp1bb), found in Rattus norvegicus (Rat).